Reading from the N-terminus, the 59-residue chain is Small ribosomal subunit protein bS21A (59 aa).

The protein belongs to the bacterial ribosomal protein bS21 family.

The chain is Small ribosomal subunit protein bS21A from Gloeobacter violaceus (strain ATCC 29082 / PCC 7421).